The sequence spans 236 residues: Eukaryotic translation initiation factor 3 subunit J (236 aa).

A disordered region spans residues M1 to A65. Acidic residues predominate over residues G28–K46. The segment covering D47 to A58 has biased composition (basic and acidic residues).

It belongs to the eIF-3 subunit J family. As to quaternary structure, component of the eukaryotic translation initiation factor 3 (eIF-3) complex. The eIF-3 complex interacts with pix.

The protein resides in the cytoplasm. Its function is as follows. Component of the eukaryotic translation initiation factor 3 (eIF-3) complex, which is involved in protein synthesis of a specialized repertoire of mRNAs and, together with other initiation factors, stimulates binding of mRNA and methionyl-tRNAi to the 40S ribosome. The eIF-3 complex specifically targets and initiates translation of a subset of mRNAs involved in cell proliferation. This is Eukaryotic translation initiation factor 3 subunit J from Drosophila melanogaster (Fruit fly).